A 652-amino-acid polypeptide reads, in one-letter code: Beta-glucuronidase (652 aa).

A signal peptide spans 1-22; sequence MVRGPAGAWAVLGPLLWGCGLA. N-linked (GlcNAc...) asparagine glycosylation is found at Asn173 and Asn420. Glu451 serves as the catalytic Proton donor. A glycan (N-linked (GlcNAc...) asparagine) is linked at Asn631.

It belongs to the glycosyl hydrolase 2 family. As to quaternary structure, homotetramer.

It is found in the lysosome. The enzyme catalyses a beta-D-glucuronoside + H2O = D-glucuronate + an alcohol. Inhibited by L-aspartic acid. Functionally, plays an important role in the degradation of dermatan and keratan sulfates. The sequence is that of Beta-glucuronidase (GUSB) from Sus scrofa (Pig).